A 436-amino-acid polypeptide reads, in one-letter code: Methanethiol oxidase (436 aa).

The N-terminal stretch at 1 to 24 is a signal peptide; it reads MKRREFGALAAGALAMGLPFRAFA.

This sequence belongs to the selenium-binding protein family.

It localises to the periplasm. The catalysed reaction is methanethiol + O2 + H2O = hydrogen sulfide + formaldehyde + H2O2 + H(+). The protein operates within organosulfur degradation. Its function is as follows. Catalyzes the oxidation of methanethiol. The polypeptide is Methanethiol oxidase (Ruegeria pomeroyi (strain ATCC 700808 / DSM 15171 / DSS-3) (Silicibacter pomeroyi)).